The following is a 49-amino-acid chain: Large ribosomal subunit protein bL33B (49 aa).

It belongs to the bacterial ribosomal protein bL33 family.

The polypeptide is Large ribosomal subunit protein bL33B (Lactobacillus helveticus (strain DPC 4571)).